A 104-amino-acid polypeptide reads, in one-letter code: MKKILIPMLALGGALAMQPALAQDGEALFKSKPCAACHSVDTKMVGPALKEVAAKNAGVEGAADTLALHIKNGSQGVWGPIPMPPNPVTEEEAKILAEWVLSLK.

A signal peptide spans 1–22 (MKKILIPMLALGGALAMQPALA). 4 residues coordinate heme c: Cys-34, Cys-37, His-38, and Met-83.

Post-translationally, binds 1 heme c group covalently per subunit.

The protein localises to the periplasm. In terms of biological role, electron donor for cytochrome cd1 in nitrite and nitrate respiration. This Stutzerimonas stutzeri (Pseudomonas stutzeri) protein is Cytochrome c-551 (nirM).